The chain runs to 98 residues: NADH-ubiquinone oxidoreductase chain 4L (98 aa).

3 consecutive transmembrane segments (helical) span residues 1–21, 28–48, and 59–79; these read MMPINLNLIMAFSLALIGALV, STLLCLEGMMLSLFIQMALLI, and APLILLVFSACEAGLGLALLV.

It belongs to the complex I subunit 4L family. Core subunit of respiratory chain NADH dehydrogenase (Complex I) which is composed of 45 different subunits.

It localises to the mitochondrion inner membrane. It catalyses the reaction a ubiquinone + NADH + 5 H(+)(in) = a ubiquinol + NAD(+) + 4 H(+)(out). In terms of biological role, core subunit of the mitochondrial membrane respiratory chain NADH dehydrogenase (Complex I) which catalyzes electron transfer from NADH through the respiratory chain, using ubiquinone as an electron acceptor. Part of the enzyme membrane arm which is embedded in the lipid bilayer and involved in proton translocation. In Distoechurus pennatus (Feather-tailed possum), this protein is NADH-ubiquinone oxidoreductase chain 4L (MT-ND4L).